We begin with the raw amino-acid sequence, 335 residues long: Tetraacyldisaccharide 4'-kinase (335 aa).

59 to 66 (TAGGNGKT) contacts ATP.

This sequence belongs to the LpxK family.

The catalysed reaction is a lipid A disaccharide + ATP = a lipid IVA + ADP + H(+). Its pathway is glycolipid biosynthesis; lipid IV(A) biosynthesis; lipid IV(A) from (3R)-3-hydroxytetradecanoyl-[acyl-carrier-protein] and UDP-N-acetyl-alpha-D-glucosamine: step 6/6. Its function is as follows. Transfers the gamma-phosphate of ATP to the 4'-position of a tetraacyldisaccharide 1-phosphate intermediate (termed DS-1-P) to form tetraacyldisaccharide 1,4'-bis-phosphate (lipid IVA). This Vibrio cholerae serotype O1 (strain ATCC 39541 / Classical Ogawa 395 / O395) protein is Tetraacyldisaccharide 4'-kinase.